A 68-amino-acid chain; its full sequence is Intracellular calcium channel modulator CCP-Ts (68 aa).

A signal peptide spans 1–23; the sequence is MNPKLLIVIGLLLATGVCSFAKA. 3 disulfides stabilise this stretch: C33-C47, C40-C53, and C46-C62.

This sequence belongs to the scorpion calcin-like family. Expressed by the venom gland. In intravenously injected mice, the labeled toxin has preference for heart, liver and lungs.

The protein localises to the secreted. The protein resides in the nucleus. Its function is as follows. Cell penetrating peptide (CPP) that increases intracellular calcium release through the activation of nuclear inositol 1,4,5-trisphosphate receptors (ITPR) of cardiomyocytes, thereby causing an increase in the contraction frequency of these cells. In vivo, this toxin is not lethal to mice, hovewer anti-CPP serum reduces venom lethality, suggesting that this toxin is lethal when it acts in synergy with other venom components. This is Intracellular calcium channel modulator CCP-Ts from Tityus serrulatus (Brazilian scorpion).